The primary structure comprises 104 residues: Large ribosomal subunit protein uL24 (104 aa).

The protein belongs to the universal ribosomal protein uL24 family. As to quaternary structure, part of the 50S ribosomal subunit.

Its function is as follows. One of two assembly initiator proteins, it binds directly to the 5'-end of the 23S rRNA, where it nucleates assembly of the 50S subunit. In terms of biological role, one of the proteins that surrounds the polypeptide exit tunnel on the outside of the subunit. This chain is Large ribosomal subunit protein uL24, found in Anaplasma phagocytophilum (strain HZ).